An 817-amino-acid chain; its full sequence is LisH domain-containing protein ARMC9 (817 aa).

Positions 15-47 constitute a LisH domain; that stretch reads SESDLLSMISEYLKFGEFEETARTFEKEVKRKG. Disordered stretches follow at residues 580–605, 610–629, and 642–817; these read SATI…EEDV, LDKE…ESLL, and KTKR…SNRK. Over residues 586–605 the composition is skewed to acidic residues; sequence QEPESDDEEDEDDDDDEEDV. Polar residues-rich tracts occupy residues 692-715 and 740-750; these read SSRP…TLAT and GQTTNSVQSYS. Low complexity predominate over residues 805-817; that stretch reads GRPSQQSSQSNRK.

In terms of tissue distribution, expressed in multiple CNS regions, including the cerebellum, all periventricular regions, and all layers of the retina.

The protein resides in the cytoplasm. It is found in the cytoskeleton. It localises to the cilium basal body. Its subcellular location is the cell projection. The protein localises to the cilium. The protein resides in the microtubule organizing center. It is found in the centrosome. It localises to the centriole. In terms of biological role, involved in ciliogenesis. It is required for appropriate acetylation and polyglutamylation of ciliary microtubules, and regulation of cilium length. Acts as a positive regulator of hedgehog (Hh) signaling. The protein is LisH domain-containing protein ARMC9 (armc9) of Danio rerio (Zebrafish).